A 338-amino-acid polypeptide reads, in one-letter code: Ketol-acid reductoisomerase (NADP(+)) (338 aa).

Residues Met1 to Thr181 enclose the KARI N-terminal Rossmann domain. Residues Tyr24–Gln27, Lys47, Ser50, Ser52, and Asp82–Gln85 each bind NADP(+). The active site involves His107. Gly133 serves as a coordination point for NADP(+). The 146-residue stretch at Ser182–Ile327 folds into the KARI C-terminal knotted domain. 4 residues coordinate Mg(2+): Asp190, Glu194, Glu226, and Glu230. Ser251 lines the substrate pocket.

Belongs to the ketol-acid reductoisomerase family. It depends on Mg(2+) as a cofactor.

The catalysed reaction is (2R)-2,3-dihydroxy-3-methylbutanoate + NADP(+) = (2S)-2-acetolactate + NADPH + H(+). The enzyme catalyses (2R,3R)-2,3-dihydroxy-3-methylpentanoate + NADP(+) = (S)-2-ethyl-2-hydroxy-3-oxobutanoate + NADPH + H(+). Its pathway is amino-acid biosynthesis; L-isoleucine biosynthesis; L-isoleucine from 2-oxobutanoate: step 2/4. It participates in amino-acid biosynthesis; L-valine biosynthesis; L-valine from pyruvate: step 2/4. Involved in the biosynthesis of branched-chain amino acids (BCAA). Catalyzes an alkyl-migration followed by a ketol-acid reduction of (S)-2-acetolactate (S2AL) to yield (R)-2,3-dihydroxy-isovalerate. In the isomerase reaction, S2AL is rearranged via a Mg-dependent methyl migration to produce 3-hydroxy-3-methyl-2-ketobutyrate (HMKB). In the reductase reaction, this 2-ketoacid undergoes a metal-dependent reduction by NADPH to yield (R)-2,3-dihydroxy-isovalerate. The protein is Ketol-acid reductoisomerase (NADP(+)) of Geobacter sulfurreducens (strain ATCC 51573 / DSM 12127 / PCA).